Here is a 179-residue protein sequence, read N- to C-terminus: Ribosome maturation factor RimP (179 aa).

It belongs to the RimP family.

Its subcellular location is the cytoplasm. In terms of biological role, required for maturation of 30S ribosomal subunits. The polypeptide is Ribosome maturation factor RimP (Chlorobium chlorochromatii (strain CaD3)).